A 238-amino-acid polypeptide reads, in one-letter code: MSEVTTAEFNEDGVYLRKVRSFVLREGRLTTGQAKALESFWPTMGLDYSPQAINFTEVFGREADTVLEIGFGMGASLVEMAANAPELNFIGVEVHKPGVGACLGEAGNAGISNLRVYHHDAVEVLENAIPDSSLARVQLFFPDPWHKKRHHKRRIVQPEFVELLRRKLKIGGVFHMATDWENYAEHMLEVMSAAPGYQNQSDTQTYVPRPDHRPLTKFENRGQRLGHGVWDLMFERVE.

Residues Glu-68, Glu-93, Asp-120, and Asp-143 each coordinate S-adenosyl-L-methionine. Asp-143 is a catalytic residue. Substrate-binding positions include Lys-147, Asp-179, and 216 to 219; that span reads TKFE.

Belongs to the class I-like SAM-binding methyltransferase superfamily. TrmB family.

It carries out the reaction guanosine(46) in tRNA + S-adenosyl-L-methionine = N(7)-methylguanosine(46) in tRNA + S-adenosyl-L-homocysteine. It functions in the pathway tRNA modification; N(7)-methylguanine-tRNA biosynthesis. Its function is as follows. Catalyzes the formation of N(7)-methylguanine at position 46 (m7G46) in tRNA. This is tRNA (guanine-N(7)-)-methyltransferase from Shewanella amazonensis (strain ATCC BAA-1098 / SB2B).